Reading from the N-terminus, the 269-residue chain is Indole-3-glycerol phosphate synthase (269 aa).

This sequence belongs to the TrpC family.

The enzyme catalyses 1-(2-carboxyphenylamino)-1-deoxy-D-ribulose 5-phosphate + H(+) = (1S,2R)-1-C-(indol-3-yl)glycerol 3-phosphate + CO2 + H2O. It participates in amino-acid biosynthesis; L-tryptophan biosynthesis; L-tryptophan from chorismate: step 4/5. The sequence is that of Indole-3-glycerol phosphate synthase from Roseiflexus castenholzii (strain DSM 13941 / HLO8).